Reading from the N-terminus, the 433-residue chain is Pyrimidine-nucleoside phosphorylase (433 aa).

A phosphate-binding site is contributed by 81–83; the sequence is KHS. The K(+) site is built by Gly88 and Thr90. Residues Thr92, 108–110, and Thr120 contribute to the phosphate site; that span reads KMS. Residues Arg168 and Lys187 each contribute to the substrate site. K(+) contacts are provided by Leu243, Ala246, and Glu255.

Belongs to the thymidine/pyrimidine-nucleoside phosphorylase family. In terms of assembly, homodimer. The cofactor is K(+).

The catalysed reaction is uridine + phosphate = alpha-D-ribose 1-phosphate + uracil. It carries out the reaction thymidine + phosphate = 2-deoxy-alpha-D-ribose 1-phosphate + thymine. It catalyses the reaction 2'-deoxyuridine + phosphate = 2-deoxy-alpha-D-ribose 1-phosphate + uracil. In terms of biological role, catalyzes phosphorolysis of the pyrimidine nucleosides uridine, thymidine and 2'-deoxyuridine with the formation of the corresponding pyrimidine base and ribose-1-phosphate. The protein is Pyrimidine-nucleoside phosphorylase (pdp) of Staphylococcus aureus (strain bovine RF122 / ET3-1).